The primary structure comprises 394 residues: Probable nucleoredoxin 2 (394 aa).

2 consecutive Thioredoxin domains span residues glycine 15–glutamate 176 and serine 180–aspartate 327.

The protein belongs to the nucleoredoxin family.

It catalyses the reaction [protein]-dithiol + NAD(+) = [protein]-disulfide + NADH + H(+). The catalysed reaction is [protein]-dithiol + NADP(+) = [protein]-disulfide + NADPH + H(+). Its function is as follows. Probable thiol-disulfide oxidoreductase that may participate in various redox reactions. This chain is Probable nucleoredoxin 2, found in Oryza sativa subsp. japonica (Rice).